The sequence spans 185 residues: Peptidoglycan-recognition protein SC1a (185 aa).

An N-terminal signal peptide occupies residues M1 to G21. The N-acetylmuramoyl-L-alanine amidase domain maps to S46–G170. A Zn(2+)-binding site is contributed by H51. C58 and C64 are joined by a disulfide. H160 and C168 together coordinate Zn(2+).

Belongs to the N-acetylmuramoyl-L-alanine amidase 2 family. It depends on Zn(2+) as a cofactor.

Its subcellular location is the secreted. The enzyme catalyses Hydrolyzes the link between N-acetylmuramoyl residues and L-amino acid residues in certain cell-wall glycopeptides.. In terms of biological role, N-acetylmuramyl-L-alanine amidase involved in innate immunity by degrading bacterial peptidoglycans (PGN). Plays a scavenger role by digesting biologically active PGN into biologically inactive fragments. Has no direct bacteriolytic activity. This Drosophila melanogaster (Fruit fly) protein is Peptidoglycan-recognition protein SC1a.